The following is a 203-amino-acid chain: Ribosomal RNA large subunit methyltransferase E (203 aa).

Residues Gly51, Trp53, Asp69, Asp85, and Asp108 each coordinate S-adenosyl-L-methionine. Lys148 (proton acceptor) is an active-site residue.

The protein belongs to the class I-like SAM-binding methyltransferase superfamily. RNA methyltransferase RlmE family.

It is found in the cytoplasm. It carries out the reaction uridine(2552) in 23S rRNA + S-adenosyl-L-methionine = 2'-O-methyluridine(2552) in 23S rRNA + S-adenosyl-L-homocysteine + H(+). Functionally, specifically methylates the uridine in position 2552 of 23S rRNA at the 2'-O position of the ribose in the fully assembled 50S ribosomal subunit. This Methanocorpusculum labreanum (strain ATCC 43576 / DSM 4855 / Z) protein is Ribosomal RNA large subunit methyltransferase E.